The primary structure comprises 87 residues: Conotoxin Ca6.2 (87 aa).

The signal sequence occupies residues 1–19 (MHTLEMLLLVLLLVPLAPG). Positions 20–52 (EGDGQAVGGDRNPSEARRAYKRLLQRPARRMDR) are excised as a propeptide. Disulfide bonds link Cys55/Cys64, Cys58/Cys70, and Cys63/Cys84.

This sequence belongs to the conotoxin Q superfamily. As to expression, expressed by the venom duct.

It localises to the secreted. This Conus caracteristicus (Characteristic cone) protein is Conotoxin Ca6.2.